The primary structure comprises 320 residues: HPr kinase/phosphorylase (320 aa).

Catalysis depends on residues H141 and K162. Residue G156 to S163 participates in ATP binding. Position 163 (S163) interacts with Mg(2+). The active-site Proton acceptor; for phosphorylation activity. Proton donor; for dephosphorylation activity is the D180. The tract at residues L204–N213 is important for the catalytic mechanism of both phosphorylation and dephosphorylation. Residue E205 participates in Mg(2+) binding. R248 is a catalytic residue. Positions P269–R274 are important for the catalytic mechanism of dephosphorylation.

It belongs to the HPrK/P family. As to quaternary structure, homohexamer. Mg(2+) is required as a cofactor.

The catalysed reaction is [HPr protein]-L-serine + ATP = [HPr protein]-O-phospho-L-serine + ADP + H(+). It catalyses the reaction [HPr protein]-O-phospho-L-serine + phosphate + H(+) = [HPr protein]-L-serine + diphosphate. Functionally, catalyzes the ATP- as well as the pyrophosphate-dependent phosphorylation of a specific serine residue in HPr, a phosphocarrier protein of the phosphoenolpyruvate-dependent sugar phosphotransferase system (PTS). HprK/P also catalyzes the pyrophosphate-producing, inorganic phosphate-dependent dephosphorylation (phosphorolysis) of seryl-phosphorylated HPr (P-Ser-HPr). The chain is HPr kinase/phosphorylase from Neisseria meningitidis serogroup B (strain ATCC BAA-335 / MC58).